Here is a 545-residue protein sequence, read N- to C-terminus: Glucose-6-phosphate isomerase (545 aa).

The Proton donor role is filled by Glu-351. Catalysis depends on residues His-382 and Lys-510.

Belongs to the GPI family.

The protein localises to the cytoplasm. The catalysed reaction is alpha-D-glucose 6-phosphate = beta-D-fructose 6-phosphate. The protein operates within carbohydrate biosynthesis; gluconeogenesis. It participates in carbohydrate degradation; glycolysis; D-glyceraldehyde 3-phosphate and glycerone phosphate from D-glucose: step 2/4. Functionally, catalyzes the reversible isomerization of glucose-6-phosphate to fructose-6-phosphate. The sequence is that of Glucose-6-phosphate isomerase from Shewanella sp. (strain MR-4).